The primary structure comprises 100 residues: NADH-quinone oxidoreductase subunit K (100 aa).

The next 3 helical transmembrane spans lie at 4–24, 28–48, and 60–80; these read LQHG…CLVL, LLFM…AFVV, and IMYI…LALL.

The protein belongs to the complex I subunit 4L family. As to quaternary structure, NDH-1 is composed of 13 different subunits. Subunits NuoA, H, J, K, L, M, N constitute the membrane sector of the complex.

It is found in the cell inner membrane. The enzyme catalyses a quinone + NADH + 5 H(+)(in) = a quinol + NAD(+) + 4 H(+)(out). In terms of biological role, NDH-1 shuttles electrons from NADH, via FMN and iron-sulfur (Fe-S) centers, to quinones in the respiratory chain. The immediate electron acceptor for the enzyme in this species is believed to be ubiquinone. Couples the redox reaction to proton translocation (for every two electrons transferred, four hydrogen ions are translocated across the cytoplasmic membrane), and thus conserves the redox energy in a proton gradient. The protein is NADH-quinone oxidoreductase subunit K of Proteus mirabilis (strain HI4320).